The primary structure comprises 299 residues: Phosphatidylinositol-3-phosphatase (299 aa).

The first 43 residues, 1–43 (MLRGIQALSRPLTRVYRALAVIGVLAASLLASWVGAVPQVGLA), serve as a signal peptide directing secretion.

In terms of assembly, monomer. SapM interacts with host RAB7 via its C-terminus. A metal cation is required as a cofactor.

It is found in the secreted. Its subcellular location is the host cytoplasmic vesicle. It localises to the host phagosome. It catalyses the reaction a phosphate monoester + H2O = an alcohol + phosphate. The enzyme catalyses a 1,2-diacyl-sn-glycero-3-phospho-(1D-myo-inositol-3-phosphate) + H2O = a 1,2-diacyl-sn-glycero-3-phospho-(1D-myo-inositol) + phosphate. Its activity is regulated as follows. Phosphatase activity is inhibited in vitro by low concentrations of several heavy metals (zinc chloride, sodium molybdate, magnesium chloride, and copper sulfate) and moderately high concentrations (&gt;8 mM) of EDTA. Functionally, virulence factor that plays an important role in blocking phagosome-lysosome fusion and thus participates in the intracellular survival of the pathogen. Acts as a phosphatase that dephosphorylates phosphatidylinositol 3-phosphate (PI3P), a membrane trafficking regulatory lipid essential for phagosomal acquisition of lysosomal constituents. Therefore, SapM eliminates PI3P from the phagosomal membrane by catalyzing its hydrolysis, and thus contributes to inhibition of phagosome maturation. Also interferes with autophagy: SapM blocks autophagosome-lysosome fusion in macrophages by binding to the small GTPase RAB7, which prevents RAB7 from being involved in this process and thus negatively regulates autophagy flux. In vitro, displays phosphatase activity with broad specificity; can dephosphorylate a variety of phosphoester substrates, with the highest activity against phosphoenolpyruvate, glycerophosphate, GTP, NADPH, phosphotyrosine and trehalose-6-phosphate. In contrast, the enzyme exhibits poor activity against glucose-6-phosphate, phosphothreonine, and a number of nucleotides (NADP, ATP, AMP, and GMP). The protein is Phosphatidylinositol-3-phosphatase of Mycobacterium tuberculosis (strain ATCC 25618 / H37Rv).